The chain runs to 463 residues: D(5)-like dopamine receptor (463 aa).

Over 1-39 (MENFYNETEPTEPRGGVDPLRVVTAAEDVPAPVGGVSVR) the chain is Extracellular. The N-linked (GlcNAc...) asparagine glycan is linked to Asn-6. Residues 40-65 (ALTGCVLCALIVSTLLGNTLVCAAVI) traverse the membrane as a helical segment. Residues 66–76 (KFRHLRSKVTN) lie on the Cytoplasmic side of the membrane. A helical membrane pass occupies residues 77–103 (AFVVSLAVSDLFVAVLVMPWRAVSEVA). At 104–112 (GVWLFGRFC) the chain is on the extracellular side. A disulfide bond links Cys-112 and Cys-194. A helical membrane pass occupies residues 113 to 135 (DTWVAFDIMCSTASILNLCVISM). Residues 136 to 154 (DRYWAISNPFRYERRMTRR) lie on the Cytoplasmic side of the membrane. Residues 155-180 (FAFLMIAVAWTLSVLISFIPVQLNWH) traverse the membrane as a helical segment. The Extracellular portion of the chain corresponds to 181-198 (RADNNSSAHEQGDCNASL). The chain crosses the membrane as a helical span at residues 199 to 223 (NRTYAISSSLISFYIPVLIMVGTYT). The Cytoplasmic portion of the chain corresponds to 224–273 (RIFRIAQTQIRRISSLERAAGQRAQNQSHRASTHDESALKTSFKRETKVL). A helical membrane pass occupies residues 274-301 (KTLSVIMGVFVFCWLPFFVLNCVVPFCD). The Extracellular segment spans residues 302 to 315 (VDKVGEPPCVSDTT). A helical membrane pass occupies residues 316 to 337 (FNIFVWFGWANSSLNPVIYAFN). At 338–463 (ADFRKAFTTI…PGQIQDLGDL (126 aa)) the chain is on the cytoplasmic side.

The protein belongs to the G-protein coupled receptor 1 family.

It localises to the cell membrane. In terms of biological role, receptor for dopamine. The polypeptide is D(5)-like dopamine receptor (dl) (Takifugu rubripes (Japanese pufferfish)).